We begin with the raw amino-acid sequence, 229 residues long: Potassium/proton antiporter CemA (229 aa).

2 helical membrane-spanning segments follow: residues 114–134 (IIYF…LIIL) and 189–209 (IISG…KYWI).

It belongs to the CemA family.

Its subcellular location is the plastid. It localises to the chloroplast inner membrane. It catalyses the reaction K(+)(in) + H(+)(out) = K(+)(out) + H(+)(in). Contributes to K(+)/H(+) antiport activity by supporting proton efflux to control proton extrusion and homeostasis in chloroplasts in a light-dependent manner to modulate photosynthesis. Prevents excessive induction of non-photochemical quenching (NPQ) under continuous-light conditions. Indirectly promotes efficient inorganic carbon uptake into chloroplasts. The polypeptide is Potassium/proton antiporter CemA (Lotus japonicus (Lotus corniculatus var. japonicus)).